We begin with the raw amino-acid sequence, 240 residues long: Phosphatidylserine decarboxylase proenzyme (240 aa).

Ser-205 (schiff-base intermediate with substrate; via pyruvic acid) is an active-site residue. Position 205 is a pyruvic acid (Ser); by autocatalysis (Ser-205).

The protein belongs to the phosphatidylserine decarboxylase family. PSD-A subfamily. As to quaternary structure, heterodimer of a large membrane-associated beta subunit and a small pyruvoyl-containing alpha subunit. Requires pyruvate as cofactor. Is synthesized initially as an inactive proenzyme. Formation of the active enzyme involves a self-maturation process in which the active site pyruvoyl group is generated from an internal serine residue via an autocatalytic post-translational modification. Two non-identical subunits are generated from the proenzyme in this reaction, and the pyruvate is formed at the N-terminus of the alpha chain, which is derived from the carboxyl end of the proenzyme. The post-translation cleavage follows an unusual pathway, termed non-hydrolytic serinolysis, in which the side chain hydroxyl group of the serine supplies its oxygen atom to form the C-terminus of the beta chain, while the remainder of the serine residue undergoes an oxidative deamination to produce ammonia and the pyruvoyl prosthetic group on the alpha chain.

The protein localises to the cell membrane. It catalyses the reaction a 1,2-diacyl-sn-glycero-3-phospho-L-serine + H(+) = a 1,2-diacyl-sn-glycero-3-phosphoethanolamine + CO2. The protein operates within phospholipid metabolism; phosphatidylethanolamine biosynthesis; phosphatidylethanolamine from CDP-diacylglycerol: step 2/2. Catalyzes the formation of phosphatidylethanolamine (PtdEtn) from phosphatidylserine (PtdSer). The polypeptide is Phosphatidylserine decarboxylase proenzyme (Rhodopirellula baltica (strain DSM 10527 / NCIMB 13988 / SH1)).